Here is a 342-residue protein sequence, read N- to C-terminus: tRNA N6-adenosine threonylcarbamoyltransferase (342 aa).

Fe cation is bound by residues His114 and His118. Substrate contacts are provided by residues 136-140, Asp169, Gly182, Asp186, and Asn275; that span reads LVSGG. Fe cation is bound at residue Asp301.

Belongs to the KAE1 / TsaD family. Fe(2+) is required as a cofactor.

The protein resides in the cytoplasm. The enzyme catalyses L-threonylcarbamoyladenylate + adenosine(37) in tRNA = N(6)-L-threonylcarbamoyladenosine(37) in tRNA + AMP + H(+). Functionally, required for the formation of a threonylcarbamoyl group on adenosine at position 37 (t(6)A37) in tRNAs that read codons beginning with adenine. Is involved in the transfer of the threonylcarbamoyl moiety of threonylcarbamoyl-AMP (TC-AMP) to the N6 group of A37, together with TsaE and TsaB. TsaD likely plays a direct catalytic role in this reaction. The polypeptide is tRNA N6-adenosine threonylcarbamoyltransferase (Streptococcus pyogenes serotype M18 (strain MGAS8232)).